We begin with the raw amino-acid sequence, 124 residues long: Small ribosomal subunit protein uS12 (124 aa).

Disordered regions lie at residues 9–32 and 105–124; these read RKGRRDKVAKTKTAALKGSPQRRG and QGVKNRKQARSRYGAKKEKS. The segment covering 108–118 has biased composition (basic residues); the sequence is KNRKQARSRYG.

The protein belongs to the universal ribosomal protein uS12 family. In terms of assembly, part of the 30S ribosomal subunit. Contacts proteins S8 and S17. May interact with IF1 in the 30S initiation complex.

Its function is as follows. With S4 and S5 plays an important role in translational accuracy. Functionally, interacts with and stabilizes bases of the 16S rRNA that are involved in tRNA selection in the A site and with the mRNA backbone. Located at the interface of the 30S and 50S subunits, it traverses the body of the 30S subunit contacting proteins on the other side and probably holding the rRNA structure together. The combined cluster of proteins S8, S12 and S17 appears to hold together the shoulder and platform of the 30S subunit. This Nocardia farcinica (strain IFM 10152) protein is Small ribosomal subunit protein uS12.